A 344-amino-acid chain; its full sequence is Ferrochelatase (344 aa).

Residues H190 and E270 each contribute to the Fe cation site.

This sequence belongs to the ferrochelatase family.

It localises to the cytoplasm. It carries out the reaction heme b + 2 H(+) = protoporphyrin IX + Fe(2+). It functions in the pathway porphyrin-containing compound metabolism; protoheme biosynthesis; protoheme from protoporphyrin-IX: step 1/1. In terms of biological role, catalyzes the ferrous insertion into protoporphyrin IX. The chain is Ferrochelatase from Rickettsia felis (strain ATCC VR-1525 / URRWXCal2) (Rickettsia azadi).